Here is a 79-residue protein sequence, read N- to C-terminus: Cell division protein ZapB (79 aa).

Positions 6-78 form a coiled coil; the sequence is FEKLEVKVQQ…LRALLGKMEE (73 aa).

This sequence belongs to the ZapB family. In terms of assembly, homodimer. The ends of the coiled-coil dimer bind to each other, forming polymers. Interacts with FtsZ.

It localises to the cytoplasm. Non-essential, abundant cell division factor that is required for proper Z-ring formation. It is recruited early to the divisome by direct interaction with FtsZ, stimulating Z-ring assembly and thereby promoting cell division earlier in the cell cycle. Its recruitment to the Z-ring requires functional FtsA or ZipA. In Yersinia enterocolitica serotype O:8 / biotype 1B (strain NCTC 13174 / 8081), this protein is Cell division protein ZapB.